The following is a 57-amino-acid chain: UPF0391 membrane protein XC_2938 (57 aa).

Helical transmembrane passes span 4 to 24 (WAIIFAIIGLIAGALGFGGMA) and 33 to 53 (FLFWAGIIIAIVLFVLGMTIA).

This sequence belongs to the UPF0391 family.

Its subcellular location is the cell membrane. The chain is UPF0391 membrane protein XC_2938 from Xanthomonas campestris pv. campestris (strain 8004).